The chain runs to 25 residues: LASP1 neighbor protein (25 aa).

The helical transmembrane segment at 4 to 24 threads the bilayer; the sequence is IFILMFFAIIGLVILSYIIYL.

It is found in the membrane. Functionally, may play a key role in the skin fibroblasts (FBs)-keratinocyte-like cells (KLCs). The protein is LASP1 neighbor protein of Homo sapiens (Human).